Reading from the N-terminus, the 318-residue chain is 5'-3' exonuclease (318 aa).

Residues 194–278 form the 5'-3' exonuclease domain; the sequence is AYAELALLRG…ATDAPVTLST (85 aa).

In terms of biological role, 5'-3' exonuclease acting preferentially on double-stranded DNA. The protein is 5'-3' exonuclease of Mycobacterium tuberculosis (strain ATCC 25618 / H37Rv).